A 336-amino-acid chain; its full sequence is Holliday junction branch migration complex subunit RuvB (336 aa).

The large ATPase domain (RuvB-L) stretch occupies residues 4 to 184 (ADRLISAGTT…FGIVQRLEFY (181 aa)). ATP-binding positions include Ile23, Arg24, Gly65, Lys68, Thr69, Thr70, 131–133 (EDY), Arg174, Tyr184, and Arg221. Thr69 is a Mg(2+) binding site. Residues 185 to 255 (QVPDLQYIVS…IAAQALDMLN (71 aa)) form a small ATPAse domain (RuvB-S) region. Positions 258 to 336 (AEGFDYMDRK…HFGITPPEMP (79 aa)) are head domain (RuvB-H). 3 residues coordinate DNA: Arg294, Arg313, and Arg318.

It belongs to the RuvB family. In terms of assembly, homohexamer. Forms an RuvA(8)-RuvB(12)-Holliday junction (HJ) complex. HJ DNA is sandwiched between 2 RuvA tetramers; dsDNA enters through RuvA and exits via RuvB. An RuvB hexamer assembles on each DNA strand where it exits the tetramer. Each RuvB hexamer is contacted by two RuvA subunits (via domain III) on 2 adjacent RuvB subunits; this complex drives branch migration. In the full resolvosome a probable DNA-RuvA(4)-RuvB(12)-RuvC(2) complex forms which resolves the HJ.

The protein localises to the cytoplasm. It carries out the reaction ATP + H2O = ADP + phosphate + H(+). Its function is as follows. The RuvA-RuvB-RuvC complex processes Holliday junction (HJ) DNA during genetic recombination and DNA repair, while the RuvA-RuvB complex plays an important role in the rescue of blocked DNA replication forks via replication fork reversal (RFR). RuvA specifically binds to HJ cruciform DNA, conferring on it an open structure. The RuvB hexamer acts as an ATP-dependent pump, pulling dsDNA into and through the RuvAB complex. RuvB forms 2 homohexamers on either side of HJ DNA bound by 1 or 2 RuvA tetramers; 4 subunits per hexamer contact DNA at a time. Coordinated motions by a converter formed by DNA-disengaged RuvB subunits stimulates ATP hydrolysis and nucleotide exchange. Immobilization of the converter enables RuvB to convert the ATP-contained energy into a lever motion, pulling 2 nucleotides of DNA out of the RuvA tetramer per ATP hydrolyzed, thus driving DNA branch migration. The RuvB motors rotate together with the DNA substrate, which together with the progressing nucleotide cycle form the mechanistic basis for DNA recombination by continuous HJ branch migration. Branch migration allows RuvC to scan DNA until it finds its consensus sequence, where it cleaves and resolves cruciform DNA. This Escherichia coli (strain ATCC 8739 / DSM 1576 / NBRC 3972 / NCIMB 8545 / WDCM 00012 / Crooks) protein is Holliday junction branch migration complex subunit RuvB.